The sequence spans 183 residues: Putative 3-methyladenine DNA glycosylase (183 aa).

Belongs to the DNA glycosylase MPG family.

The polypeptide is Putative 3-methyladenine DNA glycosylase (Legionella pneumophila (strain Lens)).